A 205-amino-acid chain; its full sequence is Large ribosomal subunit protein uL4 (205 aa).

The segment at 43–78 is disordered; sequence ARAGTKAQKTRSEVAGGGKKPWRQKGTGNARAGTIR.

Belongs to the universal ribosomal protein uL4 family. In terms of assembly, part of the 50S ribosomal subunit.

Its function is as follows. One of the primary rRNA binding proteins, this protein initially binds near the 5'-end of the 23S rRNA. It is important during the early stages of 50S assembly. It makes multiple contacts with different domains of the 23S rRNA in the assembled 50S subunit and ribosome. Functionally, forms part of the polypeptide exit tunnel. The chain is Large ribosomal subunit protein uL4 from Halorhodospira halophila (strain DSM 244 / SL1) (Ectothiorhodospira halophila (strain DSM 244 / SL1)).